A 338-amino-acid polypeptide reads, in one-letter code: UDP-glucose 4-epimerase (338 aa).

NAD(+) contacts are provided by residues 11 to 12 (YI), 31 to 36 (DNLCNS), 58 to 59 (DI), 80 to 84 (FAGLK), N99, S124, Y149, K153, and F178. Positions 124 and 149 each coordinate substrate. Residue Y149 is the Proton acceptor of the active site. Substrate contacts are provided by residues N179, 199–200 (NL), 216–218 (SVF), R231, and 292–295 (RPGD).

It belongs to the NAD(P)-dependent epimerase/dehydratase family. Homodimer. NAD(+) serves as cofactor.

The catalysed reaction is UDP-alpha-D-glucose = UDP-alpha-D-galactose. It functions in the pathway carbohydrate metabolism; galactose metabolism. Involved in the metabolism of galactose. Catalyzes the conversion of UDP-galactose (UDP-Gal) to UDP-glucose (UDP-Glc) through a mechanism involving the transient reduction of NAD. This is UDP-glucose 4-epimerase (galE) from Pasteurella multocida (strain Pm70).